A 118-amino-acid polypeptide reads, in one-letter code: Large ribosomal subunit protein bL20 (118 aa).

Belongs to the bacterial ribosomal protein bL20 family.

Functionally, binds directly to 23S ribosomal RNA and is necessary for the in vitro assembly process of the 50S ribosomal subunit. It is not involved in the protein synthesizing functions of that subunit. This Nostoc punctiforme (strain ATCC 29133 / PCC 73102) protein is Large ribosomal subunit protein bL20.